Reading from the N-terminus, the 443-residue chain is MKFAHIADVHLGYEQYNQPWRAEDFAKAFKVIAEKAVESNADFVVIAGDLFHRSLPSPRTIKEAVETLWMFRKENIPVFAVEGNHDKTSRDISAYHLLESLGLLNVLGLRRNPVRGENVESLRIQNVYLVKGVVDDVEILGDRHRSKWQLEKVLPLLKPQSDKSVLVLHQAVKEVVDIDLDMAYELTINDLPEASYYAFGHIHLPKIYEFDGKAIAYPGSVERYDLREASKIVRYRDELVLKDGIRKGFILVKNFRPEFVEIETRELYDVEIEDESVEGLEKKFLEVLGRADKEGIMVAKLKSSDAVDVRRLSEVAAKRVRYAEIRFERILEEIEEVEIKQESEFFTEFELKLLELLRGEMDEDEVYSLVVEHYLSGGALKQEEGAEERVVEEETEKKVEEQFKGDEEADEAERRAEETEKAKSTKKARKPKTLLDFLGVEEE.

Residues aspartate 8, histidine 10, aspartate 49, and asparagine 84 each coordinate Mn(2+). Histidine 85 serves as the catalytic Proton donor. Residues histidine 169, histidine 201, and histidine 203 each contribute to the Mn(2+) site. Positions 382–429 (QEEGAEERVVEEETEKKVEEQFKGDEEADEAERRAEETEKAKSTKKAR) are disordered. The segment covering 395-423 (TEKKVEEQFKGDEEADEAERRAEETEKAK) has biased composition (basic and acidic residues).

It belongs to the MRE11/RAD32 family. As to quaternary structure, homodimer. Forms a heterotetramer composed of two Mre11 subunits and two Rad50 subunits. The cofactor is Mn(2+).

With respect to regulation, nuclease activity is regulated by Rad50. Part of the Rad50/Mre11 complex, which is involved in the early steps of DNA double-strand break (DSB) repair. The complex may facilitate opening of the processed DNA ends to aid in the recruitment of HerA and NurA. Mre11 binds to DSB ends and has both double-stranded 3'-5' exonuclease activity and single-stranded endonuclease activity. The sequence is that of DNA double-strand break repair protein Mre11 from Archaeoglobus fulgidus (strain ATCC 49558 / DSM 4304 / JCM 9628 / NBRC 100126 / VC-16).